A 278-amino-acid chain; its full sequence is MEDVLSTHFDRIEKALSTLVDSIAAYNPSPQAAIDLVAADDQLSHGLDQLSRHQANHARILTLRAQVEALEEQKKSSVTALATLRHELHATPATSFPADTRPVRFDELLQYAKNISQYTVPPTYRERAPEAASDKDRDKDDAASSGVNTPAHAPAQPDSDAPKDRDNADNKPAEVTAEEEEWLEKLQKSQIAWYPWPSEEKIRIGNLSKLMYWQARGKDVDDFDIPAHEEAQRKGLAGVVEAPPEPEPVAEPVQAQAPRPARPAQPQATFDMFDDLDD.

A coiled-coil region spans residues 57 to 88; sequence HARILTLRAQVEALEEQKKSSVTALATLRHEL. Disordered regions lie at residues 120–181 and 240–278; these read VPPT…EEEE and VEAP…DLDD. Basic and acidic residues-rich tracts occupy residues 124–142 and 160–172; these read YRER…KDDA and DAPK…DNKP. The segment covering 250–268 has biased composition (low complexity); it reads AEPVQAQAPRPARPAQPQA.

The protein belongs to the Mediator complex subunit 4 family. Component of the Mediator complex.

Its subcellular location is the nucleus. Component of the Mediator complex, a coactivator involved in the regulated transcription of nearly all RNA polymerase II-dependent genes. Mediator functions as a bridge to convey information from gene-specific regulatory proteins to the basal RNA polymerase II transcription machinery. Mediator is recruited to promoters by direct interactions with regulatory proteins and serves as a scaffold for the assembly of a functional preinitiation complex with RNA polymerase II and the general transcription factors. This Phaeosphaeria nodorum (strain SN15 / ATCC MYA-4574 / FGSC 10173) (Glume blotch fungus) protein is Mediator of RNA polymerase II transcription subunit 4 (MED4).